The chain runs to 267 residues: NH(3)-dependent NAD(+) synthetase (267 aa).

Residue 38 to 45 (GISGGVDS) coordinates ATP. D44 contacts Mg(2+). R123 is a binding site for deamido-NAD(+). T143 serves as a coordination point for ATP. Position 148 (E148) interacts with Mg(2+). 2 residues coordinate deamido-NAD(+): K156 and D163. 2 residues coordinate ATP: K172 and S193. 250–251 (HK) contributes to the deamido-NAD(+) binding site.

Belongs to the NAD synthetase family. Homodimer.

The enzyme catalyses deamido-NAD(+) + NH4(+) + ATP = AMP + diphosphate + NAD(+) + H(+). The protein operates within cofactor biosynthesis; NAD(+) biosynthesis; NAD(+) from deamido-NAD(+) (ammonia route): step 1/1. Functionally, catalyzes the ATP-dependent amidation of deamido-NAD to form NAD. Uses ammonia as a nitrogen source. This chain is NH(3)-dependent NAD(+) synthetase, found in Pyrobaculum aerophilum (strain ATCC 51768 / DSM 7523 / JCM 9630 / CIP 104966 / NBRC 100827 / IM2).